Here is a 300-residue protein sequence, read N- to C-terminus: ATP-dependent (S)-NAD(P)H-hydrate dehydratase (300 aa).

The YjeF C-terminal domain occupies 7–289 (IEARLKSIIP…ESIPSVFDQV (283 aa)). (6S)-NADPHX contacts are provided by residues Gly-107 and 160-166 (NVMEYRR). Residues 194 to 198 (KGQVD) and 213 to 222 (GSPRRCGGQG) contribute to the ATP site. (6S)-NADPHX is bound at residue Asp-223.

This sequence belongs to the NnrD/CARKD family. Mg(2+) is required as a cofactor.

It catalyses the reaction (6S)-NADHX + ATP = ADP + phosphate + NADH + H(+). The enzyme catalyses (6S)-NADPHX + ATP = ADP + phosphate + NADPH + H(+). Catalyzes the dehydration of the S-form of NAD(P)HX at the expense of ATP, which is converted to ADP. Together with NAD(P)HX epimerase, which catalyzes the epimerization of the S- and R-forms, the enzyme allows the repair of both epimers of NAD(P)HX, a damaged form of NAD(P)H that is a result of enzymatic or heat-dependent hydration. The polypeptide is ATP-dependent (S)-NAD(P)H-hydrate dehydratase (Entamoeba histolytica (strain ATCC 30459 / HM-1:IMSS / ABRM)).